The chain runs to 392 residues: tRNA(Met) cytidine acetate ligase (392 aa).

Residues 7-20 (VVEY…HQLH), Gly101, Asn162, and 187-188 (RI) each bind ATP.

This sequence belongs to the TmcAL family.

Its subcellular location is the cytoplasm. The catalysed reaction is cytidine(34) in elongator tRNA(Met) + acetate + ATP = N(4)-acetylcytidine(34) in elongator tRNA(Met) + AMP + diphosphate. Its function is as follows. Catalyzes the formation of N(4)-acetylcytidine (ac(4)C) at the wobble position of elongator tRNA(Met), using acetate and ATP as substrates. First activates an acetate ion to form acetyladenylate (Ac-AMP) and then transfers the acetyl group to tRNA to form ac(4)C34. This chain is tRNA(Met) cytidine acetate ligase, found in Listeria welshimeri serovar 6b (strain ATCC 35897 / DSM 20650 / CCUG 15529 / CIP 8149 / NCTC 11857 / SLCC 5334 / V8).